The primary structure comprises 345 residues: Fructose-1,6-bisphosphatase class 1 (345 aa).

4 residues coordinate Mg(2+): Glu-90, Asp-109, Leu-111, and Asp-112. Substrate contacts are provided by residues 112–115 (DGSS) and Asn-199. Glu-271 contributes to the Mg(2+) binding site.

This sequence belongs to the FBPase class 1 family. Homotetramer. Mg(2+) serves as cofactor.

Its subcellular location is the cytoplasm. It catalyses the reaction beta-D-fructose 1,6-bisphosphate + H2O = beta-D-fructose 6-phosphate + phosphate. Its pathway is carbohydrate biosynthesis; Calvin cycle. This is Fructose-1,6-bisphosphatase class 1 from Rhodopseudomonas palustris (strain BisB5).